The following is a 559-amino-acid chain: CRISPR-associated exonuclease Cas4/endonuclease Cas1 fusion (559 aa).

Residues 1-198 (MAETDGSIPL…RCSLVGICLP (198 aa)) form a CRISPR-associated exonuclease Cas4 region. A [4Fe-4S] cluster-binding site is contributed by cysteine 22. 2 residues coordinate Mn(2+): aspartate 87 and aspartate 100. [4Fe-4S] cluster is bound by residues cysteine 187, cysteine 190, and cysteine 196. The segment at 224 to 559 (LYVQSPKAYV…IPAYPNFVTR (336 aa)) is CRISPR-associated endonuclease Cas1. Mn(2+) contacts are provided by glutamate 380, histidine 451, and glutamate 466.

This sequence in the N-terminal section; belongs to the CRISPR-associated exonuclease Cas4 family. In the C-terminal section; belongs to the CRISPR-associated endonuclease Cas1 family. As to quaternary structure, homodimer, forms a heterotetramer with a Cas2 homodimer. [4Fe-4S] cluster is required as a cofactor. Requires Mg(2+) as cofactor. The cofactor is Mn(2+).

The enzyme catalyses exonucleolytic cleavage in the 5'- to 3'-direction to yield nucleoside 3'-phosphates.. In terms of biological role, CRISPR (clustered regularly interspaced short palindromic repeat), is an adaptive immune system that provides protection against mobile genetic elements (viruses, transposable elements and conjugative plasmids). CRISPR clusters contain spacers, sequences complementary to antecedent mobile elements, and target invading nucleic acids. CRISPR clusters are transcribed and processed into CRISPR RNA (crRNA). The Cas4 region acts as a ssDNA exonuclease, while the Cas1 region acts as a dsDNA endonuclease. Involved in the integration of spacer DNA into the CRISPR cassette. This Geobacter sulfurreducens (strain ATCC 51573 / DSM 12127 / PCA) protein is CRISPR-associated exonuclease Cas4/endonuclease Cas1 fusion (cas4-cas1).